We begin with the raw amino-acid sequence, 216 residues long: NADH-quinone oxidoreductase subunit C (216 aa).

This sequence belongs to the complex I 30 kDa subunit family. NDH-1 is composed of 14 different subunits. Subunits NuoB, C, D, E, F, and G constitute the peripheral sector of the complex.

Its subcellular location is the cell inner membrane. It catalyses the reaction a quinone + NADH + 5 H(+)(in) = a quinol + NAD(+) + 4 H(+)(out). NDH-1 shuttles electrons from NADH, via FMN and iron-sulfur (Fe-S) centers, to quinones in the respiratory chain. The immediate electron acceptor for the enzyme in this species is believed to be ubiquinone. Couples the redox reaction to proton translocation (for every two electrons transferred, four hydrogen ions are translocated across the cytoplasmic membrane), and thus conserves the redox energy in a proton gradient. The sequence is that of NADH-quinone oxidoreductase subunit C from Francisella tularensis subsp. holarctica (strain OSU18).